The sequence spans 446 residues: Alpha-galacturonidase (446 aa).

Residue 10–72 (IKIAYIGGGS…GRWRYEAVST (63 aa)) participates in NAD(+) binding. Asparagine 151 contributes to the substrate binding site. Residue cysteine 173 participates in Mn(2+) binding. The Proton donor role is filled by histidine 174. Histidine 210 is a Mn(2+) binding site.

This sequence belongs to the glycosyl hydrolase 4 family. In terms of assembly, homotetramer. It depends on NAD(+) as a cofactor. Requires Mn(2+) as cofactor.

The enzyme catalyses [(1-&gt;4)-alpha-D-galacturonosyl](n) + H2O = alpha-D-galacturonate + [(1-&gt;4)-alpha-D-galacturonosyl](n-1). Functionally, alpha-galacturonidase able to catalyze the hydrolysis of the chromogenic substrate p-nitrophenyl-alpha-D-galacturonic acid (pNPalphaGalUA), and of the probable natural substrate alpha-1,4-di-galacturonate (GalUA(2)). Can neither hydrolyze pNPbetaGalUA, nor the stereoisomeric pNPalphaGlcUA. Does not display alpha- or beta-glucosidase activity as it fails to hydrolyze melibiose, raffinose, lactose and the chromogenic analogs, pNPalphaGal and pNPbetaGal. Cannot use the following compounds as substrates: pNP-N-acetyl-alpha- and beta-D-galactosaminide, pNP-N-acetyl-alpha- and beta-D-glucosaminide, pNP-alpha-L- and beta-L-arabinopyranoside, pNP-alpha- and beta-D-glucuronide, pNP-alpha- and beta-D-glucopyranoside, pNP-alpha- and beta-D-glucopyranoside 6-phosphate, pNP-alpha-D-galactopyranoside 6-phosphate and oNP-beta-D-galactopyranoside 6-phosphate. The chain is Alpha-galacturonidase (lplD) from Bacillus subtilis (strain 168).